Reading from the N-terminus, the 1435-residue chain is Protein SPP41 (1435 aa).

Disordered stretches follow at residues 16–74 (VGNL…NIEI), 88–265 (VANA…ENTL), 286–309 (AKQTVDIQDNSHTDNTNNEDVEAQ), 322–424 (ELLS…DDEF), 442–482 (ETST…DSLD), 519–708 (SVSD…MKVP), and 934–972 (QQLDKQLPARSAGTEISSSESPDKATPDPHSNSTIAGHT). Residues 27-42 (GQEEGEVQGGEQEGDD) show a composition bias toward acidic residues. 3 stretches are compositionally biased toward basic and acidic residues: residues 53 to 63 (IEPKHPDDSQH), 98 to 127 (EQAKPENHLENGSEHVTSDTADDNHEKEQQ), and 139 to 154 (LKSDGEPLRENTERRV). A UIM domain is found at 171–190 (QDDENLRMAILESLQELNTN). Residues 196–205 (EPEKHEHAAP) show a composition bias toward basic and acidic residues. A compositionally biased stretch (basic residues) spans 211–223 (SKKSSKKKKKDKS). The segment covering 224 to 234 (KNRESSKDKSS) has biased composition (basic and acidic residues). A compositionally biased stretch (basic residues) spans 235–249 (KKSKSSSHSKKHAKD). The span at 286-301 (AKQTVDIQDNSHTDNT) shows a compositional bias: polar residues. Residues 345–355 (KAVEPPRKPTA) show a composition bias toward basic and acidic residues. A compositionally biased stretch (basic residues) spans 367–383 (KPKKRPPQEKKKTKSKT). A compositionally biased stretch (low complexity) spans 384–398 (SKAASTANKSPASES). 2 stretches are compositionally biased toward polar residues: residues 442 to 451 (ETSTHTATQD) and 459 to 482 (DFTSPVQSQYTTEDASTANDDSLD). Composition is skewed to basic and acidic residues over residues 524-548 (LPHDNLSRMEKKSVPKSSSKSEKKT), 610-628 (KNKELKEKEKLERQTAREE), and 637-652 (KQRLAEEQEELKKIVE). Residues 665–674 (KSGKPKKPYR) show a composition bias toward basic residues. Positions 676-691 (WTPEELLKRSQEAEKP) are enriched in basic and acidic residues. The Nuclear localization signal signature appears at 683–699 (KRSQEAEKPRKVKKERK). The segment covering 692 to 706 (RKVKKERKKKEKKMK) has biased composition (basic residues). Lys-981 participates in a covalent cross-link: Glycyl lysine isopeptide (Lys-Gly) (interchain with G-Cter in SUMO). The span at 1005 to 1014 (KLELTKRAES) shows a compositional bias: basic and acidic residues. Residues 1005-1125 (KLELTKRAES…DSVNTTTGKP (121 aa)) are disordered. At Ser-1014 the chain carries Phosphoserine. Residues 1021–1032 (NVETAKETQSVQ) are compositionally biased toward polar residues. 2 stretches are compositionally biased toward basic and acidic residues: residues 1033 to 1082 (EIKE…EKIA) and 1091 to 1103 (LSDKKDGDEKSTL). Ser-1067 is modified (phosphoserine). A compositionally biased stretch (polar residues) spans 1108-1123 (AQLTGNEPDSVNTTTG). A Glycyl lysine isopeptide (Lys-Gly) (interchain with G-Cter in SUMO) cross-link involves residue Lys-1154.

Interacts with PRP8 and RAP1.

It is found in the nucleus. In terms of biological role, negative regulator of PRP3 and PRP4 genes. This is Protein SPP41 (SPP41) from Saccharomyces cerevisiae (strain ATCC 204508 / S288c) (Baker's yeast).